Consider the following 285-residue polypeptide: tRNA (guanine-N(7)-)-methyltransferase (285 aa).

S-adenosyl-L-methionine-binding positions include glycine 102, 125-126 (EI), 160-161 (NA), and cysteine 180. Residue aspartate 183 is part of the active site. Residue 258-260 (TEE) participates in S-adenosyl-L-methionine binding.

Belongs to the class I-like SAM-binding methyltransferase superfamily. TrmB family. Forms a complex with TRM82.

The protein resides in the nucleus. It catalyses the reaction guanosine(46) in tRNA + S-adenosyl-L-methionine = N(7)-methylguanosine(46) in tRNA + S-adenosyl-L-homocysteine. It participates in tRNA modification; N(7)-methylguanine-tRNA biosynthesis. Its function is as follows. Catalyzes the formation of N(7)-methylguanine at position 46 (m7G46) in tRNA. This is tRNA (guanine-N(7)-)-methyltransferase from Candida glabrata (strain ATCC 2001 / BCRC 20586 / JCM 3761 / NBRC 0622 / NRRL Y-65 / CBS 138) (Yeast).